The chain runs to 335 residues: Solute-binding protein Veis_3954 (335 aa).

Positions 1-34 (MPSTRPLPRPSSRSLRRLALGLGLAFGLGATAAA) are cleaved as a signal peptide. (R)-pantoate is bound by residues Gln-50, Glu-82, 155–158 (NGFR), Arg-179, and Asn-219.

Belongs to the bacterial solute-binding protein 7 family. As to quaternary structure, the complex is comprised of an extracytoplasmic solute-binding protein and a heteromeric permease formed by two transmembrane proteins.

The protein resides in the periplasm. Solute-binding protein that binds (R)-pantoate and D-erythronate (in vitro). Probably part of a tripartite ATP-independent periplasmic (TRAP) transport system that mediates solute transport into the cytoplasm. This Verminephrobacter eiseniae (strain EF01-2) protein is Solute-binding protein Veis_3954.